A 555-amino-acid chain; its full sequence is WRKY transcription factor WRKY24 (555 aa).

Disordered regions lie at residues 133 to 183 (TAPA…AGAN) and 197 to 248 (SEMA…CTFP). Low complexity predominate over residues 163-183 (QQQQQPWGYQQQPAGMDAGAN). The segment at residues 214-278 (SQRRSSDDGY…YKGTHNHAKP (65 aa)) is a DNA-binding region (WRKY 1). Residues 253–259 (KKKVERS) carry the Nuclear localization signal motif. Positions 270 to 365 (KGTHNHAKPQ…DGEGISMAGN (96 aa)) are disordered. 2 stretches are compositionally biased toward polar residues: residues 277–294 (KPQN…QVLQ) and 310–320 (TAATPENSSAS). A compositionally biased stretch (basic and acidic residues) spans 347–356 (DSKRWRKDGD). The WRKY 2 DNA-binding region spans 379–444 (SDIDILDDGY…YEGKHNHDVP (66 aa)). Residues 466 to 555 (HPYLPNQPPP…DDMFFQNSLY (90 aa)) form a transcription repression of gibberellic acid (GA)-induced promoters region. Residues 514 to 555 (FDDARGSYMSQHQQQQRQNDAMHASRAKEEPGDDMFFQNSLY) form a disordered region.

Belongs to the WRKY group II-a family. Expressed in aleurone cells. Mostly expressed in aleurone layers and leaves, and, to a lower extent, in roots, panicles and embryos.

It localises to the nucleus. Functionally, transcription activator. Interacts specifically with the W box (5'-(T)TGAC[CT]-3'), a frequently occurring elicitor-responsive cis-acting element. Negative regulator of both gibberellic acid (GA) and abscisic acid (ABA) signaling in aleurone cells, probably by interfering with GAM1, via the specific repression of GA- and ABA-induced promoters. The sequence is that of WRKY transcription factor WRKY24 from Oryza sativa subsp. japonica (Rice).